The chain runs to 394 residues: Muscle cell intermediate filament protein AV71 (394 aa).

The coil 1B stretch occupies residues 1 to 73; the sequence is AEINLVRRRV…RVHDQEITEL (73 aa). An IF rod domain is found at 1 to 239; the sequence is AEINLVRRRV…KMLEGEENRA (239 aa). The linker 12 stretch occupies residues 74-91; the sequence is QAMAARDTTPENREYFKN. A coil 2 region spans residues 92–239; that stretch reads ELSSAIRDIR…KMLEGEENRA (148 aa). Residues 240–394 form a tail region; sequence GLRQLVEQVV…HIQRSSHTIN (155 aa). Positions 272–389 constitute an LTD domain; the sequence is SRTSFQRSAK…EERASHIQRS (118 aa).

It belongs to the intermediate filament family.

The sequence is that of Muscle cell intermediate filament protein AV71 (AV71) from Acanthocheilonema viteae (Filarial nematode worm).